Consider the following 170-residue polypeptide: Phosphopantetheine adenylyltransferase (170 aa).

Thr-14 is a binding site for substrate. ATP contacts are provided by residues 14 to 15 (TF) and His-22. Lys-46, Leu-78, and Arg-92 together coordinate substrate. ATP is bound by residues 93–95 (GLR), Glu-103, and 128–134 (WLYISST).

It belongs to the bacterial CoaD family. In terms of assembly, homohexamer. It depends on Mg(2+) as a cofactor.

Its subcellular location is the cytoplasm. It catalyses the reaction (R)-4'-phosphopantetheine + ATP + H(+) = 3'-dephospho-CoA + diphosphate. It participates in cofactor biosynthesis; coenzyme A biosynthesis; CoA from (R)-pantothenate: step 4/5. Reversibly transfers an adenylyl group from ATP to 4'-phosphopantetheine, yielding dephospho-CoA (dPCoA) and pyrophosphate. The polypeptide is Phosphopantetheine adenylyltransferase (Oleidesulfovibrio alaskensis (strain ATCC BAA-1058 / DSM 17464 / G20) (Desulfovibrio alaskensis)).